The primary structure comprises 224 residues: Synaptogyrin-2 (224 aa).

An N-acetylmethionine modification is found at Met1. Ser3 carries the post-translational modification Phosphoserine. The region spanning 20–171 (FLSQPQVVTR…LASLAYQRYK (152 aa)) is the MARVEL domain. Transmembrane regions (helical) follow at residues 31-51 (VSMV…YTNI), 72-92 (SAIG…DAFF), 105-125 (VIGD…GFCF), and 147-167 (AAIT…SLAY).

It belongs to the synaptogyrin family. In terms of processing, may be tyrosine phosphorylated by Src.

It localises to the cytoplasmic vesicle membrane. Its subcellular location is the cytoplasmic vesicle. The protein resides in the secretory vesicle. It is found in the synaptic vesicle membrane. In terms of biological role, may play a role in regulated exocytosis. In neuronal cells, modulates the localization of synaptophysin/SYP into synaptic-like microvesicles and may therefore play a role in the formation and/or the maturation of this vesicles. May also play a role in GLUT4 storage and transport to the plasma membrane. This Mus musculus (Mouse) protein is Synaptogyrin-2.